Consider the following 156-residue polypeptide: Ribosomal RNA large subunit methyltransferase H (156 aa).

Residues leucine 73, glycine 104, and 123–128 each bind S-adenosyl-L-methionine; that span reads LSSLTL.

Belongs to the RNA methyltransferase RlmH family. In terms of assembly, homodimer.

Its subcellular location is the cytoplasm. It catalyses the reaction pseudouridine(1915) in 23S rRNA + S-adenosyl-L-methionine = N(3)-methylpseudouridine(1915) in 23S rRNA + S-adenosyl-L-homocysteine + H(+). Functionally, specifically methylates the pseudouridine at position 1915 (m3Psi1915) in 23S rRNA. The chain is Ribosomal RNA large subunit methyltransferase H from Neisseria meningitidis serogroup A / serotype 4A (strain DSM 15465 / Z2491).